Here is a 488-residue protein sequence, read N- to C-terminus: Cobyric acid synthase (488 aa).

The GATase cobBQ-type domain occupies valine 248–alanine 441. Cysteine 328 (nucleophile) is an active-site residue. Histidine 433 is a catalytic residue.

The protein belongs to the CobB/CobQ family. CobQ subfamily.

It participates in cofactor biosynthesis; adenosylcobalamin biosynthesis. Its function is as follows. Catalyzes amidations at positions B, D, E, and G on adenosylcobyrinic A,C-diamide. NH(2) groups are provided by glutamine, and one molecule of ATP is hydrogenolyzed for each amidation. This Burkholderia ambifaria (strain ATCC BAA-244 / DSM 16087 / CCUG 44356 / LMG 19182 / AMMD) (Burkholderia cepacia (strain AMMD)) protein is Cobyric acid synthase.